A 344-amino-acid chain; its full sequence is MSTSLSYRDAGVDIDAGDQLVENIKPFAKRTMRPEVLGDLGGFGALVEIGKKYKNPVLVSGTDGVGTKLKLAFDWDKHDTVGIDLVAMSVNDILVQGAEPLFFLDYFACGELDVPRATDVIKGIAQGCEESGCALIGGETAEMPGMYPVGEYDLAGFAVGVVEKENVITGRSIGAGDVVLGLASNGAHSNGYSLIRKIIERDNPDLDAEFDNGKTLREAVIAPTRLYVKPILAALEKFTIKGMAHITGGGITENVPRVLPENTVAQIDAKSWELPKLFQWLQKAGNVETQEMYRTFNCGIGMVVIVAAEDADAVQDLLGEQGETVYRLGLIRERQGDEHQTQVA.

It belongs to the AIR synthase family.

The protein resides in the cytoplasm. The enzyme catalyses 2-formamido-N(1)-(5-O-phospho-beta-D-ribosyl)acetamidine + ATP = 5-amino-1-(5-phospho-beta-D-ribosyl)imidazole + ADP + phosphate + H(+). The protein operates within purine metabolism; IMP biosynthesis via de novo pathway; 5-amino-1-(5-phospho-D-ribosyl)imidazole from N(2)-formyl-N(1)-(5-phospho-D-ribosyl)glycinamide: step 2/2. This chain is Phosphoribosylformylglycinamidine cyclo-ligase, found in Neisseria meningitidis serogroup C / serotype 2a (strain ATCC 700532 / DSM 15464 / FAM18).